The following is an 84-amino-acid chain: Putative membrane protein insertion efficiency factor (84 aa).

The interval 64-84 (GGSGYDPPPPRHQPRKWKCEE) is disordered. A compositionally biased stretch (basic residues) spans 75-84 (HQPRKWKCEE).

Belongs to the UPF0161 family.

It localises to the cell inner membrane. Functionally, could be involved in insertion of integral membrane proteins into the membrane. The polypeptide is Putative membrane protein insertion efficiency factor (Caulobacter vibrioides (strain ATCC 19089 / CIP 103742 / CB 15) (Caulobacter crescentus)).